We begin with the raw amino-acid sequence, 54 residues long: Large ribosomal subunit protein bL33 (54 aa).

This sequence belongs to the bacterial ribosomal protein bL33 family.

This Frankia alni (strain DSM 45986 / CECT 9034 / ACN14a) protein is Large ribosomal subunit protein bL33.